The sequence spans 280 residues: Probable S-methyl-5'-thioinosine phosphorylase (280 aa).

Phosphate contacts are provided by residues threonine 8 and 50-51 (RH). Residue methionine 175 coordinates substrate. Residue threonine 176 coordinates phosphate. A substrate-binding site is contributed by 199 to 201 (NYA).

Belongs to the PNP/MTAP phosphorylase family. MTAP subfamily. Homotrimer.

It catalyses the reaction S-methyl-5'-thioinosine + phosphate = 5-(methylsulfanyl)-alpha-D-ribose 1-phosphate + hypoxanthine. The protein operates within purine metabolism; purine nucleoside salvage. Its function is as follows. Catalyzes the reversible phosphorylation of S-methyl-5'-thioinosine (MTI) to hypoxanthine and 5-methylthioribose-1-phosphate. Involved in the breakdown of S-methyl-5'-thioadenosine (MTA), a major by-product of polyamine biosynthesis. Catabolism of (MTA) occurs via deamination to MTI and phosphorolysis to hypoxanthine. The chain is Probable S-methyl-5'-thioinosine phosphorylase from Methanothermobacter thermautotrophicus (strain ATCC 29096 / DSM 1053 / JCM 10044 / NBRC 100330 / Delta H) (Methanobacterium thermoautotrophicum).